A 476-amino-acid polypeptide reads, in one-letter code: Serine/threonine-protein kinase chk-2 (476 aa).

In terms of domain architecture, FHA spans 66–127 (FVCGRGSDDA…NGTLVNQEMI (62 aa)). A Protein kinase domain is found at 170 to 436 (HVTSHSLGKG…AVELMSTQWM (267 aa)). Residues 177-184 (GKGGFGKV), Lys199, and 252-258 (EYVGGGE) each bind ATP. Asp301 acts as the Proton acceptor in catalysis. Residues 305–306 (EN) and Asp322 each bind ATP.

This sequence belongs to the protein kinase superfamily. CAMK Ser/Thr protein kinase family. CHK2 subfamily. Mg(2+) is required as a cofactor. In terms of tissue distribution, highly expressed in germline tissue.

The protein localises to the nucleus. The enzyme catalyses L-seryl-[protein] + ATP = O-phospho-L-seryl-[protein] + ADP + H(+). It carries out the reaction L-threonyl-[protein] + ATP = O-phospho-L-threonyl-[protein] + ADP + H(+). Functionally, serine/threonine-protein kinase which is required for checkpoint-mediated cell cycle arrest, activation of DNA repair and apoptosis in response to the presence of DNA double-strand breaks. May also negatively regulate cell cycle progression during unperturbed cell cycles. Phosphorylates and inhibits cdc25 phosphatase, preventing entry into mitosis. Required for nuclear reorganization and homologous chromosome pairing during meiotic prophase. This chain is Serine/threonine-protein kinase chk-2 (chk-2), found in Caenorhabditis elegans.